The chain runs to 313 residues: tRNA-cytidine(32) 2-sulfurtransferase (313 aa).

Positions 54–59 match the PP-loop motif motif; the sequence is SGGKDS. Cys129, Cys132, and Cys220 together coordinate [4Fe-4S] cluster.

It belongs to the TtcA family. As to quaternary structure, homodimer. Mg(2+) serves as cofactor. The cofactor is [4Fe-4S] cluster.

The protein resides in the cytoplasm. It catalyses the reaction cytidine(32) in tRNA + S-sulfanyl-L-cysteinyl-[cysteine desulfurase] + AH2 + ATP = 2-thiocytidine(32) in tRNA + L-cysteinyl-[cysteine desulfurase] + A + AMP + diphosphate + H(+). It functions in the pathway tRNA modification. Its function is as follows. Catalyzes the ATP-dependent 2-thiolation of cytidine in position 32 of tRNA, to form 2-thiocytidine (s(2)C32). The sulfur atoms are provided by the cysteine/cysteine desulfurase (IscS) system. This chain is tRNA-cytidine(32) 2-sulfurtransferase, found in Methylibium petroleiphilum (strain ATCC BAA-1232 / LMG 22953 / PM1).